The following is a 121-amino-acid chain: Group 1 truncated hemoglobin (121 aa).

An N-acetylmethionine modification is found at methionine 1. Histidine 73 is a binding site for heme.

It belongs to the truncated hemoglobin family. Group I subfamily. In terms of assembly, monomer. Requires heme as cofactor.

The protein is Group 1 truncated hemoglobin of Tetrahymena pyriformis.